The following is a 339-amino-acid chain: DNA-directed RNA polymerase subunit alpha (339 aa).

The tract at residues 1-233 (MVREEIAVAT…DLFIPFLHAE (233 aa)) is alpha N-terminal domain (alpha-NTD). An alpha C-terminal domain (alpha-CTD) region spans residues 267-339 (KKMALKSIFI…FGFDLPKNGK (73 aa)).

The protein belongs to the RNA polymerase alpha chain family. In plastids the minimal PEP RNA polymerase catalytic core is composed of four subunits: alpha, beta, beta', and beta''. When a (nuclear-encoded) sigma factor is associated with the core the holoenzyme is formed, which can initiate transcription.

It is found in the plastid. Its subcellular location is the chloroplast. The enzyme catalyses RNA(n) + a ribonucleoside 5'-triphosphate = RNA(n+1) + diphosphate. In terms of biological role, DNA-dependent RNA polymerase catalyzes the transcription of DNA into RNA using the four ribonucleoside triphosphates as substrates. This chain is DNA-directed RNA polymerase subunit alpha, found in Piper cenocladum (Ant piper).